Reading from the N-terminus, the 166-residue chain is MAIKLEDKKAIVAEVNEAAKVALSAVVADARGVTVGAMTGLRKEAREAGVYVRVVRNTLLKRAVEGTEFSILNDAFKGPTLIAFSNEHPGAAARLFKEFAKGQDKFEIKAAAFDGKFLAANQIDVLATLPTRDEAIAQLMSVIQGATSKLARTLAALRDQKEAAAA.

The protein belongs to the universal ribosomal protein uL10 family. In terms of assembly, part of the ribosomal stalk of the 50S ribosomal subunit. The N-terminus interacts with L11 and the large rRNA to form the base of the stalk. The C-terminus forms an elongated spine to which L12 dimers bind in a sequential fashion forming a multimeric L10(L12)X complex.

Functionally, forms part of the ribosomal stalk, playing a central role in the interaction of the ribosome with GTP-bound translation factors. This chain is Large ribosomal subunit protein uL10, found in Pseudomonas entomophila (strain L48).